The sequence spans 73 residues: Sec-independent protein translocase protein TatA (73 aa).

A helical membrane pass occupies residues 1-21 (MGSFSIWHWMIVLVIVLLVFG).

This sequence belongs to the TatA/E family. The Tat system comprises two distinct complexes: a TatABC complex, containing multiple copies of TatA, TatB and TatC subunits, and a separate TatA complex, containing only TatA subunits. Substrates initially bind to the TatABC complex, which probably triggers association of the separate TatA complex to form the active translocon.

Its subcellular location is the cell inner membrane. Part of the twin-arginine translocation (Tat) system that transports large folded proteins containing a characteristic twin-arginine motif in their signal peptide across membranes. TatA could form the protein-conducting channel of the Tat system. This is Sec-independent protein translocase protein TatA from Mesorhizobium japonicum (strain LMG 29417 / CECT 9101 / MAFF 303099) (Mesorhizobium loti (strain MAFF 303099)).